Here is a 1367-residue protein sequence, read N- to C-terminus: Protein patched homolog 3 (1367 aa).

Over 1–97 (MSFPDEETDL…WLFRIGCFVQ (97 aa)) the chain is Cytoplasmic. Residues 98–118 (RWAWSTIFISLFLYCLCLGGL) form a helical membrane-spanning segment. Residues 119-625 (RHVTIETDLV…IADMLEEFSQ (507 aa)) are Extracellular-facing. N235, N310, N454, and N591 each carry an N-linked (GlcNAc...) asparagine glycan. Residues 626 to 646 (FNYIIIVIGYILMVIYAAFTQ) traverse the membrane as a helical segment. Residues 627-788 (NYIIIVIGYI…MFIFPAMIGI (162 aa)) enclose the SSD domain. Over 647-659 (GRFQGWWLAVQSN) the chain is Cytoplasmic. Residues 660 to 680 (VALAICGVILVTISSICGLGF) traverse the membrane as a helical segment. Topologically, residues 681–694 (ATHLGINFNAATTQ) are extracellular. The helical transmembrane segment at 695–715 (VVPFLSLGLGIDDMFLLLHNY) threads the bilayer. The Cytoplasmic segment spans residues 716–737 (DEIINICNKNEIGVLLKETGMS). The helical transmembrane segment at 738-758 (VMLTSINNILAFISGYVLPIP) threads the bilayer. Residues 759 to 767 (ALRSFCSQT) lie on the Extracellular side of the membrane. A helical membrane pass occupies residues 768–788 (AILLAFNLIFLMFIFPAMIGI). At 789 to 863 (DLRRQRKGKR…KIYIPALKNN (75 aa)) the chain is on the cytoplasmic side. The chain crosses the membrane as a helical span at residues 864–884 (VVKACVLIGTTTAVVFGLYGM). Residues 885–1143 (YTSTLGLELA…WEQYLTLRWN (259 aa)) are Extracellular-facing. Residues 1144–1164 (LFQAICIIALAVFCVISILMF) traverse the membrane as a helical segment. The Cytoplasmic segment spans residues 1165–1171 (NPWAATL). Residues 1172–1192 (IMCIVVITTIELGGFMGLMGI) form a helical membrane-spanning segment. At 1193-1199 (KMNPISA) the chain is on the extracellular side. A helical membrane pass occupies residues 1200–1220 (VTLICAVGIGVEFTAHVELAF). Topologically, residues 1221-1237 (LTALGTIDQRLESCLQH) are cytoplasmic. Residues 1238-1258 (MFVPVYHGAISTFLGVVMLVF) form a helical membrane-spanning segment. Residues 1259-1273 (SEFDFVVTYFFYTMT) are Extracellular-facing. The chain crosses the membrane as a helical span at residues 1274 to 1294 (LLVALGVFNGLCVLPVILTLV). Residues 1295–1367 (GPKPELTPTD…SDDESSPAHK (73 aa)) are Cytoplasmic-facing. Residues 1302–1367 (PTDGSSVLPP…SDDESSPAHK (66 aa)) are disordered. Positions 1346–1356 (RDSPSTSSASH) are enriched in low complexity.

The protein belongs to the patched family. In terms of tissue distribution, in males, expressed in the precursor and mature sensory rays, the cloaca, and pre-anal ganglia and cephalic neurons. Also expressed in five cells in the valve region between the seminal vesicle and vas deferens of the somatic gonad.

The protein localises to the apical cell membrane. It localises to the cell junction. The protein resides in the adherens junction. In terms of biological role, regulates osmosis during embryonic development. Required for larval development and in particular is involved in larval molting. The sequence is that of Protein patched homolog 3 from Caenorhabditis elegans.